A 475-amino-acid chain; its full sequence is Actin-related protein 10 (475 aa).

Belongs to the actin family.

It is found in the cytoplasm. The protein localises to the cytoskeleton. This Dictyostelium discoideum (Social amoeba) protein is Actin-related protein 10.